A 463-amino-acid polypeptide reads, in one-letter code: Fumarate hydratase class II (463 aa).

Substrate-binding positions include 97–99 (SGT), 128–131 (HPND), 138–140 (SSN), and Thr186. His187 serves as the catalytic Proton donor/acceptor. Ser317 is an active-site residue. Substrate-binding positions include Ser318 and 323-325 (KVN).

It belongs to the class-II fumarase/aspartase family. Fumarase subfamily. In terms of assembly, homotetramer.

It is found in the cytoplasm. It carries out the reaction (S)-malate = fumarate + H2O. It functions in the pathway carbohydrate metabolism; tricarboxylic acid cycle; (S)-malate from fumarate: step 1/1. Its function is as follows. Involved in the TCA cycle. Catalyzes the stereospecific interconversion of fumarate to L-malate. This is Fumarate hydratase class II from Helicobacter pylori (strain ATCC 700392 / 26695) (Campylobacter pylori).